The chain runs to 795 residues: Phenylalanine--tRNA ligase beta subunit (795 aa).

Residues 39-148 enclose the tRNA-binding domain; it reads ADEFHTVVVG…ADAPVGEDYR (110 aa). The B5 domain occupies 401–476; that stretch reads PKRDGITLRA…RVYGYNSIQA (76 aa). The Mg(2+) site is built by D454, D460, E463, and E464. One can recognise an FDX-ACB domain in the interval 701–794; that stretch reads SRYPSIRRDL…LKSEFNATLR (94 aa).

This sequence belongs to the phenylalanyl-tRNA synthetase beta subunit family. Type 1 subfamily. As to quaternary structure, tetramer of two alpha and two beta subunits. It depends on Mg(2+) as a cofactor.

The protein resides in the cytoplasm. It carries out the reaction tRNA(Phe) + L-phenylalanine + ATP = L-phenylalanyl-tRNA(Phe) + AMP + diphosphate + H(+). The chain is Phenylalanine--tRNA ligase beta subunit from Idiomarina loihiensis (strain ATCC BAA-735 / DSM 15497 / L2-TR).